Here is a 234-residue protein sequence, read N- to C-terminus: Sugar fermentation stimulation protein A (234 aa).

Positions 201 to 220 (LLSEAQQRGVEILAYKAELS) form a DNA-binding region, H-T-H motif.

Belongs to the SfsA family.

Binds to DNA non-specifically. Could be a regulatory factor involved in maltose metabolism. This chain is Sugar fermentation stimulation protein A, found in Escherichia coli O127:H6 (strain E2348/69 / EPEC).